The primary structure comprises 148 residues: Male-specific protein scotti (148 aa).

Positions P56–K78 are disordered. N129 carries N-linked (GlcNAc...) asparagine glycosylation.

This sequence belongs to the male-specific scotti family.

In terms of biological role, post-meiotically transcribed gene that has a role in late spermiogenesis; required for actin cone progression during spermatid individualization. This is Male-specific protein scotti from Drosophila sechellia (Fruit fly).